Here is a 100-residue protein sequence, read N- to C-terminus: Integration host factor subunit alpha (100 aa).

The tract at residues 54 to 73 (DLRDKRQRPGRNPKTGEEIP) is disordered.

It belongs to the bacterial histone-like protein family. In terms of assembly, heterodimer of an alpha and a beta chain.

This protein is one of the two subunits of integration host factor, a specific DNA-binding protein that functions in genetic recombination as well as in transcriptional and translational control. The protein is Integration host factor subunit alpha of Pseudomonas aeruginosa (strain UCBPP-PA14).